The following is a 400-amino-acid chain: Chalcone synthase WHP1 (400 aa).

The active site involves Cys167.

This sequence belongs to the thiolase-like superfamily. Chalcone/stilbene synthases family.

It carries out the reaction (E)-4-coumaroyl-CoA + 3 malonyl-CoA + 3 H(+) = 2',4,4',6'-tetrahydroxychalcone + 3 CO2 + 4 CoA. The protein operates within secondary metabolite biosynthesis; flavonoid biosynthesis. In terms of biological role, the primary product of this enzyme is 4,2',4',6'-tetrahydroxychalcone (also termed naringenin-chalcone or chalcone) which can under specific conditions spontaneously isomerize into naringenin. The polypeptide is Chalcone synthase WHP1 (WHP1) (Zea mays (Maize)).